The primary structure comprises 415 residues: Tyrosine--tRNA ligase (415 aa).

Tyr34 is a binding site for L-tyrosine. Residues 39–48 (PSADSLHLGN) carry the 'HIGH' region motif. L-tyrosine is bound by residues Tyr162 and Gln166. A 'KMSKS' region motif is present at residues 224-228 (KFGKS). Residue Lys227 participates in ATP binding. Residues 346-413 (IKIIDLLNLA…KRNYFLILWN (68 aa)) form the S4 RNA-binding domain.

This sequence belongs to the class-I aminoacyl-tRNA synthetase family. TyrS type 1 subfamily. In terms of assembly, homodimer.

The protein localises to the cytoplasm. The catalysed reaction is tRNA(Tyr) + L-tyrosine + ATP = L-tyrosyl-tRNA(Tyr) + AMP + diphosphate + H(+). Functionally, catalyzes the attachment of tyrosine to tRNA(Tyr) in a two-step reaction: tyrosine is first activated by ATP to form Tyr-AMP and then transferred to the acceptor end of tRNA(Tyr). This Ureaplasma parvum serovar 3 (strain ATCC 27815 / 27 / NCTC 11736) protein is Tyrosine--tRNA ligase.